The sequence spans 417 residues: Probable glucuronosyltransferase Os01g0926700 (417 aa).

Over 1–3 the chain is Cytoplasmic; sequence MRR. A helical; Signal-anchor for type II membrane protein membrane pass occupies residues 4–24; that stretch reads WVLAIAILAAAVCFFLGAQAQ. The Lumenal portion of the chain corresponds to 25–417; it reads EVRQGHQTER…AGPVGDLKPW (393 aa). N-linked (GlcNAc...) asparagine glycans are attached at residues Asn144 and Asn405.

Belongs to the glycosyltransferase 47 family.

Its subcellular location is the golgi apparatus membrane. In terms of biological role, involved in the synthesis of glucuronoxylan hemicellulose in secondary cell walls. The protein is Probable glucuronosyltransferase Os01g0926700 of Oryza sativa subsp. japonica (Rice).